Reading from the N-terminus, the 100-residue chain is Aspartyl/glutamyl-tRNA(Asn/Gln) amidotransferase subunit C (100 aa).

The protein belongs to the GatC family. Heterotrimer of A, B and C subunits.

The enzyme catalyses L-glutamyl-tRNA(Gln) + L-glutamine + ATP + H2O = L-glutaminyl-tRNA(Gln) + L-glutamate + ADP + phosphate + H(+). The catalysed reaction is L-aspartyl-tRNA(Asn) + L-glutamine + ATP + H2O = L-asparaginyl-tRNA(Asn) + L-glutamate + ADP + phosphate + 2 H(+). Functionally, allows the formation of correctly charged Asn-tRNA(Asn) or Gln-tRNA(Gln) through the transamidation of misacylated Asp-tRNA(Asn) or Glu-tRNA(Gln) in organisms which lack either or both of asparaginyl-tRNA or glutaminyl-tRNA synthetases. The reaction takes place in the presence of glutamine and ATP through an activated phospho-Asp-tRNA(Asn) or phospho-Glu-tRNA(Gln). The protein is Aspartyl/glutamyl-tRNA(Asn/Gln) amidotransferase subunit C of Staphylococcus haemolyticus (strain JCSC1435).